The primary structure comprises 417 residues: Probable diacetyl reductase [(R)-acetoin forming] 2 (417 aa).

Cys39 contacts Zn(2+). Ser63 carries the post-translational modification Phosphoserine. Zn(2+) contacts are provided by His64, Cys120, Cys123, Cys131, and Gln173. Residues 380–417 (GELNREADNEKKEISELSSRKDQERLRESINEAKLRHT) form a disordered region. Residues 381-417 (ELNREADNEKKEISELSSRKDQERLRESINEAKLRHT) show a composition bias toward basic and acidic residues.

This sequence belongs to the zinc-containing alcohol dehydrogenase family. It depends on Zn(2+) as a cofactor.

It is found in the cytoplasm. The protein resides in the nucleus. It catalyses the reaction (R)-acetoin + NAD(+) = diacetyl + NADH + H(+). Functionally, catalyzes the irreversible reduction of 2,3-butanediol to (S)-acetoin in the presence of NADH. This is Probable diacetyl reductase [(R)-acetoin forming] 2 (BDH2) from Saccharomyces cerevisiae (strain ATCC 204508 / S288c) (Baker's yeast).